A 75-amino-acid chain; its full sequence is UPF0346 protein LGAS_0911 (75 aa).

It belongs to the UPF0346 family.

This chain is UPF0346 protein LGAS_0911, found in Lactobacillus gasseri (strain ATCC 33323 / DSM 20243 / BCRC 14619 / CIP 102991 / JCM 1131 / KCTC 3163 / NCIMB 11718 / NCTC 13722 / AM63).